Reading from the N-terminus, the 228-residue chain is Cytidylate kinase (228 aa).

An ATP-binding site is contributed by 17 to 25 (GPTASGKGT).

It belongs to the cytidylate kinase family. Type 1 subfamily.

Its subcellular location is the cytoplasm. It carries out the reaction CMP + ATP = CDP + ADP. The enzyme catalyses dCMP + ATP = dCDP + ADP. This is Cytidylate kinase from Burkholderia thailandensis (strain ATCC 700388 / DSM 13276 / CCUG 48851 / CIP 106301 / E264).